The following is a 318-amino-acid chain: Gamma-glutamyl hydrolase (318 aa).

The N-terminal stretch at 1–24 is a signal peptide; the sequence is MARLGRLLSVLGLVLCGATGLGLS. The region spanning 25 to 318 is the Gamma-glutamyl hydrolase domain; that stretch reads APPAPTPKKP…SSFQQSYIFD (294 aa). Asn-116 carries N-linked (GlcNAc...) asparagine glycosylation. Cys-134 functions as the Nucleophile in the catalytic mechanism. Residues Asn-163 and Asn-203 are each glycosylated (N-linked (GlcNAc...) asparagine). The active-site Proton donor is His-244. Asn-307 carries an N-linked (GlcNAc...) asparagine glycan.

The protein belongs to the peptidase C26 family. Homodimer.

It localises to the secreted. The protein resides in the extracellular space. Its subcellular location is the lysosome. It is found in the melanosome. It catalyses the reaction (6S)-5,6,7,8-tetrahydrofolyl-(gamma-L-Glu)(n) + (n-1) H2O = (6S)-5,6,7,8-tetrahydrofolate + (n-1) L-glutamate. Functionally, hydrolyzes the polyglutamate sidechains of pteroylpolyglutamates. Progressively removes gamma-glutamyl residues from pteroylpoly-gamma-glutamate to yield pteroyl-alpha-glutamate (folic acid) and free glutamate. May play an important role in the bioavailability of dietary pteroylpolyglutamates and in the metabolism of pteroylpolyglutamates and antifolates. Exhibits either endo- or exopeptidase activity depending upon the tissue of origin. When secreted, it acts primarily as an endopeptidase. In Bos taurus (Bovine), this protein is Gamma-glutamyl hydrolase (GGH).